Here is a 260-residue protein sequence, read N- to C-terminus: ELL-associated factor 2 (260 aa).

The interval 17-104 is necessary for interaction with ELL; that stretch reads LKLGESFEKQ…TGECRLEKLS (88 aa). The segment covering 116 to 126 has biased composition (basic and acidic residues); sequence GSSKIQYRKEQ. Disordered regions lie at residues 116-154 and 170-234; these read GSSK…SPAS and MDQM…HNRF. Phosphoserine is present on residues Ser146, Ser151, and Ser154. Residues 174 to 192 show a composition bias toward low complexity; sequence SSCDSSSDSKSSSSSSSED. Residues 177–260 form a necessary for transactivation activity region; sequence DSSSDSKSSS…LSESGSDSDD (84 aa). Positions 225-234 are enriched in basic and acidic residues; it reads PDIDASHNRF. The necessary for interaction with TCEA1 and transactivation activity stretch occupies residues 246 to 260; that stretch reads RNDLQLSESGSDSDD.

Belongs to the EAF family. As to quaternary structure, isoform 1 and isoform 2 interact with TCEA1. Component of the super elongation complex (SEC), at least composed of EAF1, EAF2, CDK9, MLLT3/AF9, AFF (AFF1 or AFF4), the P-TEFb complex and ELL (ELL, ELL2 or ELL3). Interacts with ELL and ELL2. In terms of tissue distribution, expressed in heart, brain, placenta, lung, skeletal muscle, kidney, pancreas, spleen, prostate, testis, small intestine, colon, adrenal, bone marrow, lymph node, spinal gland, stomach, thyroid, trachea, thymus, liver and leukocytes.

Its subcellular location is the nucleus speckle. In terms of biological role, acts as a transcriptional transactivator of TCEA1 elongation activity. Acts as a transcriptional transactivator of ELL and ELL2 elongation activities. Potent inducer of apoptosis in prostatic and non-prostatic cell lines. Inhibits prostate tumor growth in vivo. The sequence is that of ELL-associated factor 2 (EAF2) from Homo sapiens (Human).